The sequence spans 104 residues: Large ribosomal subunit protein uL24 (104 aa).

Belongs to the universal ribosomal protein uL24 family. Part of the 50S ribosomal subunit.

In terms of biological role, one of two assembly initiator proteins, it binds directly to the 5'-end of the 23S rRNA, where it nucleates assembly of the 50S subunit. One of the proteins that surrounds the polypeptide exit tunnel on the outside of the subunit. The protein is Large ribosomal subunit protein uL24 of Methylobacterium radiotolerans (strain ATCC 27329 / DSM 1819 / JCM 2831 / NBRC 15690 / NCIMB 10815 / 0-1).